The chain runs to 206 residues: Ribosomal RNA small subunit methyltransferase G (206 aa).

Residues G73, L78, 124 to 125 (VE), and R139 each bind S-adenosyl-L-methionine.

This sequence belongs to the methyltransferase superfamily. RNA methyltransferase RsmG family.

It is found in the cytoplasm. It catalyses the reaction guanosine(527) in 16S rRNA + S-adenosyl-L-methionine = N(7)-methylguanosine(527) in 16S rRNA + S-adenosyl-L-homocysteine. Functionally, specifically methylates the N7 position of guanine in position 527 of 16S rRNA. The protein is Ribosomal RNA small subunit methyltransferase G of Idiomarina loihiensis (strain ATCC BAA-735 / DSM 15497 / L2-TR).